Consider the following 528-residue polypeptide: Major facilitator-type transporter psiT2 (528 aa).

Positions 1-20 are disordered; the sequence is MSPERSASLEPDEHSSLLSD. 5 helical membrane passes run 87 to 107, 125 to 145, 148 to 168, 174 to 194, and 220 to 240; these read FYSGLIESVFACGEVCSIFML, LGVALFTALFGLSTSFTMMLV, VCAGLLAGATPIVHSVVSELT, ALVVPLYGLITPIGFAIGPLI, and FLPSFVPCCLAVVGVTFGYFF. Low complexity predominate over residues 260–270; that stretch reads STSSISSRTST. Residues 260 to 299 form a disordered region; that stretch reads STSSISSRTSTLYGATDDHNRDASESTALSPEEAEDEIDS. 6 consecutive transmembrane segments (helical) span residues 322 to 342, 357 to 377, 388 to 408, 424 to 444, 460 to 479, and 493 to 513; these read FLMFLYTSSDVLFSLYCFTAV, AFSVAGVIAMLMQLCITPWVL, FCMFSFPLVFALMGCLNPLAQ, GLLYAAIAVLLLLARVCVMAF, LATANGLVQVSMTIARALCP, and NILGGHLWVLIMVTISLAGVW.

It belongs to the major facilitator superfamily. TCR/Tet family.

Its subcellular location is the membrane. Its function is as follows. Major facilitator-type transporter; part of the gene cluster that mediates the biosynthesis of psilocybin, a psychotropic tryptamine-derived natural product. The protein is Major facilitator-type transporter psiT2 of Psilocybe cyanescens.